A 376-amino-acid polypeptide reads, in one-letter code: 2-oxoglutarate synthase subunit KorA (376 aa).

In terms of assembly, heterotetramer of the KorA, KorB, KorC and KorD subunits.

The catalysed reaction is 2 oxidized [2Fe-2S]-[ferredoxin] + 2-oxoglutarate + CoA = succinyl-CoA + 2 reduced [2Fe-2S]-[ferredoxin] + CO2 + H(+). This chain is 2-oxoglutarate synthase subunit KorA (korA), found in Methanothermobacter thermautotrophicus (strain ATCC 29096 / DSM 1053 / JCM 10044 / NBRC 100330 / Delta H) (Methanobacterium thermoautotrophicum).